A 366-amino-acid polypeptide reads, in one-letter code: Peptide chain release factor 2 (366 aa).

Gln251 is modified (N5-methylglutamine).

The protein belongs to the prokaryotic/mitochondrial release factor family. In terms of processing, methylated by PrmC. Methylation increases the termination efficiency of RF2.

The protein localises to the cytoplasm. Peptide chain release factor 2 directs the termination of translation in response to the peptide chain termination codons UGA and UAA. In Exiguobacterium sp. (strain ATCC BAA-1283 / AT1b), this protein is Peptide chain release factor 2.